The chain runs to 886 residues: Alanine--tRNA ligase (886 aa).

Zn(2+)-binding residues include H564, H568, C666, and H670.

It belongs to the class-II aminoacyl-tRNA synthetase family. Requires Zn(2+) as cofactor.

Its subcellular location is the cytoplasm. The enzyme catalyses tRNA(Ala) + L-alanine + ATP = L-alanyl-tRNA(Ala) + AMP + diphosphate. Functionally, catalyzes the attachment of alanine to tRNA(Ala) in a two-step reaction: alanine is first activated by ATP to form Ala-AMP and then transferred to the acceptor end of tRNA(Ala). Also edits incorrectly charged Ser-tRNA(Ala) and Gly-tRNA(Ala) via its editing domain. The polypeptide is Alanine--tRNA ligase (Prochlorococcus marinus (strain MIT 9515)).